The sequence spans 406 residues: Bifunctional enzyme Fae/Hps (406 aa).

The interval 1 to 164 (MSDIYEIGEA…AEKDRGTHPI (164 aa)) is formaldehyde-activating enzyme. Residue H20 is the Proton donor of the active site. Residues D22, L51, K69, T71, and Q86 each coordinate substrate. Residues 165-406 (MGFKAMKLWN…RLALDEDEKI (242 aa)) are 3-hexulose-6-phosphate synthase.

It in the N-terminal section; belongs to the formaldehyde-activating enzyme family. In the C-terminal section; belongs to the HPS/KGPDC family. HPS subfamily.

The catalysed reaction is 5,6,7,8-tetrahydromethanopterin + formaldehyde = 5,10-methylenetetrahydromethanopterin + H2O. It carries out the reaction D-ribulose 5-phosphate + formaldehyde = D-arabino-hex-3-ulose 6-phosphate. It functions in the pathway carbohydrate biosynthesis; D-ribose 5-phosphate biosynthesis. Functionally, catalyzes the condensation of formaldehyde with tetrahydromethanopterin (H(4)MPT) to 5,10-methylenetetrahydromethanopterin. In terms of biological role, catalyzes the reversible formation of ribulose-5-phosphate and formaldehyde from 3-hexulose-6-phosphate. This chain is Bifunctional enzyme Fae/Hps, found in Methanosphaera stadtmanae (strain ATCC 43021 / DSM 3091 / JCM 11832 / MCB-3).